The chain runs to 185 residues: Protein-arginine kinase activator protein (185 aa).

2 positions are modified to phosphoarginine: R115 and R169. Residues R139 to S174 form the UVR domain.

Interacts with McsB. Phosphorylated on Arg residues by McsB.

Its function is as follows. Activates the phosphorylation activity of the protein-arginine kinase McsB. Is required for the delocalization of competence proteins from the cell poles. The polypeptide is Protein-arginine kinase activator protein (mcsA) (Bacillus subtilis (strain 168)).